A 113-amino-acid chain; its full sequence is MNTVRVAFLLVFVLAVSLGQADKDENRMEMQEKTEQGKSYLDFAENLLLQKLEELEAKLLEEDSEESRNSRQKRCIGEGVPCDENDPRCCSGLVCLKPTLHGIWYKSYYCYKK.

Positions 1–21 are cleaved as a signal peptide; the sequence is MNTVRVAFLLVFVLAVSLGQA. A propeptide spanning residues 22–74 is cleaved from the precursor; the sequence is DKDENRMEMQEKTEQGKSYLDFAENLLLQKLEELEAKLLEEDSEESRNSRQKR. Residues 61–83 form a disordered region; it reads EEDSEESRNSRQKRCIGEGVPCD. 3 disulfides stabilise this stretch: C75/C90, C82/C95, and C89/C110.

This sequence belongs to the neurotoxin 14 (magi-1) family. 01 (HNTX-16) subfamily. In terms of tissue distribution, expressed by the venom gland.

It is found in the secreted. Its function is as follows. Probable ion channel inhibitor. The protein is U11-theraphotoxin-Hhn1a of Cyriopagopus hainanus (Chinese bird spider).